Here is a 203-residue protein sequence, read N- to C-terminus: CASP-like protein 5A2 (203 aa).

The Cytoplasmic segment spans residues 1-63 (MRASRPVVHP…KDPPGAPGTP (63 aa)). Residues 39 to 58 (AAHGGENAQPRGVRMKDPPG) are disordered. The chain crosses the membrane as a helical span at residues 64–84 (GGLGLRLVQAFFAAAALAVMA). The Extracellular segment spans residues 85-94 (STDDFPSVSA). The chain crosses the membrane as a helical span at residues 95-115 (FCYLVAAAILQCLWSLSLAVV). The Cytoplasmic segment spans residues 116 to 139 (DIYALLVKRSLRNPQAVCIFTIGD). Residues 140 to 160 (GITGTLTLGAACASAGITVLI) form a helical membrane-spanning segment. Residues 161–177 (GNDLNICANNHCASFET) lie on the Extracellular side of the membrane. A helical membrane pass occupies residues 178–198 (ATAMAFISWFALAPSCVLNFW). Topologically, residues 199–203 (SMASR) are cytoplasmic.

Belongs to the Casparian strip membrane proteins (CASP) family. In terms of assembly, homodimer and heterodimers.

The protein localises to the cell membrane. This Oryza sativa subsp. indica (Rice) protein is CASP-like protein 5A2.